Here is a 198-residue protein sequence, read N- to C-terminus: Recombination protein RecR (198 aa).

A C4-type zinc finger spans residues 57 to 72 (CTICGHITDTDPCYIC). A Toprim domain is found at 80–175 (TTICVVQDPK…KVTRIAHGLP (96 aa)).

This sequence belongs to the RecR family.

In terms of biological role, may play a role in DNA repair. It seems to be involved in an RecBC-independent recombinational process of DNA repair. It may act with RecF and RecO. This chain is Recombination protein RecR, found in Geobacillus kaustophilus (strain HTA426).